Consider the following 335-residue polypeptide: Glycerol-3-phosphate dehydrogenase [NAD(P)+] (335 aa).

Residues Ser-15, Tyr-16, His-36, and Lys-110 each contribute to the NADPH site. Sn-glycerol 3-phosphate-binding residues include Lys-110, Gly-139, and Thr-141. Ala-143 serves as a coordination point for NADPH. Sn-glycerol 3-phosphate is bound by residues Lys-195, Asp-248, Ser-258, Arg-259, and Asn-260. The active-site Proton acceptor is the Lys-195. Residue Arg-259 participates in NADPH binding. Residues Val-283 and Glu-285 each contribute to the NADPH site.

It belongs to the NAD-dependent glycerol-3-phosphate dehydrogenase family.

The protein resides in the cytoplasm. It carries out the reaction sn-glycerol 3-phosphate + NAD(+) = dihydroxyacetone phosphate + NADH + H(+). The enzyme catalyses sn-glycerol 3-phosphate + NADP(+) = dihydroxyacetone phosphate + NADPH + H(+). Its pathway is membrane lipid metabolism; glycerophospholipid metabolism. In terms of biological role, catalyzes the reduction of the glycolytic intermediate dihydroxyacetone phosphate (DHAP) to sn-glycerol 3-phosphate (G3P), the key precursor for phospholipid synthesis. The polypeptide is Glycerol-3-phosphate dehydrogenase [NAD(P)+] (Haemophilus influenzae (strain 86-028NP)).